A 284-amino-acid chain; its full sequence is Bifunctional protein FolD (284 aa).

NADP(+) contacts are provided by residues 166-168 (GAS) and isoleucine 232.

The protein belongs to the tetrahydrofolate dehydrogenase/cyclohydrolase family. As to quaternary structure, homodimer.

The enzyme catalyses (6R)-5,10-methylene-5,6,7,8-tetrahydrofolate + NADP(+) = (6R)-5,10-methenyltetrahydrofolate + NADPH. It catalyses the reaction (6R)-5,10-methenyltetrahydrofolate + H2O = (6R)-10-formyltetrahydrofolate + H(+). The protein operates within one-carbon metabolism; tetrahydrofolate interconversion. Functionally, catalyzes the oxidation of 5,10-methylenetetrahydrofolate to 5,10-methenyltetrahydrofolate and then the hydrolysis of 5,10-methenyltetrahydrofolate to 10-formyltetrahydrofolate. The chain is Bifunctional protein FolD from Shewanella sp. (strain W3-18-1).